The primary structure comprises 1066 residues: Exportin-T (1066 aa).

It belongs to the exportin family.

The protein resides in the nucleus. Its subcellular location is the cytoplasm. Its function is as follows. tRNA nucleus export receptor which facilitates tRNA translocation across the nuclear pore complex. Involved in pre-tRNA splicing, probably by affecting the interaction of pre-tRNA with splicing endonuclease. This is Exportin-T (LOS1) from Laccaria bicolor (strain S238N-H82 / ATCC MYA-4686) (Bicoloured deceiver).